The sequence spans 137 residues: Phosphoribosyl-AMP cyclohydrolase (137 aa).

Asp83 contacts Mg(2+). A Zn(2+)-binding site is contributed by Cys84. Positions 85 and 87 each coordinate Mg(2+). Residues Cys101 and Cys108 each contribute to the Zn(2+) site.

Belongs to the PRA-CH family. In terms of assembly, homodimer. Mg(2+) is required as a cofactor. The cofactor is Zn(2+).

The protein resides in the cytoplasm. The enzyme catalyses 1-(5-phospho-beta-D-ribosyl)-5'-AMP + H2O = 1-(5-phospho-beta-D-ribosyl)-5-[(5-phospho-beta-D-ribosylamino)methylideneamino]imidazole-4-carboxamide. It functions in the pathway amino-acid biosynthesis; L-histidine biosynthesis; L-histidine from 5-phospho-alpha-D-ribose 1-diphosphate: step 3/9. Functionally, catalyzes the hydrolysis of the adenine ring of phosphoribosyl-AMP. The polypeptide is Phosphoribosyl-AMP cyclohydrolase (Burkholderia mallei (strain ATCC 23344)).